A 325-amino-acid chain; its full sequence is GMP reductase (325 aa).

Cys-174 serves as the catalytic Thioimidate intermediate. NADP(+) is bound at residue 203-226 (LIADGGIRTHGDIAKSIRFGASMV).

This sequence belongs to the IMPDH/GMPR family. GuaC type 2 subfamily.

It carries out the reaction IMP + NH4(+) + NADP(+) = GMP + NADPH + 2 H(+). In terms of biological role, catalyzes the irreversible NADPH-dependent deamination of GMP to IMP. It functions in the conversion of nucleobase, nucleoside and nucleotide derivatives of G to A nucleotides, and in maintaining the intracellular balance of A and G nucleotides. This Staphylococcus aureus (strain MRSA252) protein is GMP reductase.